The sequence spans 97 residues: Aspartyl/glutamyl-tRNA(Asn/Gln) amidotransferase subunit C (97 aa).

Residues 68–97 (ETGFTQEEALSNAPQQSQGQFRTPKVVESA) form a disordered region. Polar residues predominate over residues 70 to 88 (GFTQEEALSNAPQQSQGQF).

This sequence belongs to the GatC family. Heterotrimer of A, B and C subunits.

The catalysed reaction is L-glutamyl-tRNA(Gln) + L-glutamine + ATP + H2O = L-glutaminyl-tRNA(Gln) + L-glutamate + ADP + phosphate + H(+). It carries out the reaction L-aspartyl-tRNA(Asn) + L-glutamine + ATP + H2O = L-asparaginyl-tRNA(Asn) + L-glutamate + ADP + phosphate + 2 H(+). Allows the formation of correctly charged Asn-tRNA(Asn) or Gln-tRNA(Gln) through the transamidation of misacylated Asp-tRNA(Asn) or Glu-tRNA(Gln) in organisms which lack either or both of asparaginyl-tRNA or glutaminyl-tRNA synthetases. The reaction takes place in the presence of glutamine and ATP through an activated phospho-Asp-tRNA(Asn) or phospho-Glu-tRNA(Gln). This is Aspartyl/glutamyl-tRNA(Asn/Gln) amidotransferase subunit C from Akkermansia muciniphila (strain ATCC BAA-835 / DSM 22959 / JCM 33894 / BCRC 81048 / CCUG 64013 / CIP 107961 / Muc).